The sequence spans 300 residues: Diphthine methyl ester synthase (300 aa).

S-adenosyl-L-methionine is bound by residues Leu9, Asp85, Gly88, Ser113–Val114, and Leu164. Ser172 carries the phosphoserine modification. Positions 222 and 247 each coordinate S-adenosyl-L-methionine. Ser298 carries the phosphoserine modification.

This sequence belongs to the diphthine synthase family.

It is found in the cytoplasm. It catalyses the reaction 2-[(3S)-amino-3-carboxypropyl]-L-histidyl-[translation elongation factor 2] + 4 S-adenosyl-L-methionine = diphthine methyl ester-[translation elongation factor 2] + 4 S-adenosyl-L-homocysteine + 3 H(+). It functions in the pathway protein modification; peptidyl-diphthamide biosynthesis. In terms of biological role, S-adenosyl-L-methionine-dependent methyltransferase that catalyzes four methylations of the modified target histidine residue in translation elongation factor 2 (EF-2), to form an intermediate called diphthine methyl ester. The four successive methylation reactions represent the second step of diphthamide biosynthesis. This Saccharomyces cerevisiae (strain ATCC 204508 / S288c) (Baker's yeast) protein is Diphthine methyl ester synthase (DPH5).